Reading from the N-terminus, the 427-residue chain is 3-phosphoshikimate 1-carboxyvinyltransferase (427 aa).

The 3-phosphoshikimate site is built by lysine 22, serine 23, and arginine 27. Lysine 22 contacts phosphoenolpyruvate. Residues glycine 96 and arginine 124 each contribute to the phosphoenolpyruvate site. Serine 169, serine 170, glutamine 171, serine 197, aspartate 313, asparagine 336, and lysine 340 together coordinate 3-phosphoshikimate. Residue glutamine 171 participates in phosphoenolpyruvate binding. Residue aspartate 313 is the Proton acceptor of the active site. Residues arginine 344, arginine 386, and lysine 411 each coordinate phosphoenolpyruvate.

This sequence belongs to the EPSP synthase family. As to quaternary structure, monomer.

The protein localises to the cytoplasm. The enzyme catalyses 3-phosphoshikimate + phosphoenolpyruvate = 5-O-(1-carboxyvinyl)-3-phosphoshikimate + phosphate. The protein operates within metabolic intermediate biosynthesis; chorismate biosynthesis; chorismate from D-erythrose 4-phosphate and phosphoenolpyruvate: step 6/7. Its function is as follows. Catalyzes the transfer of the enolpyruvyl moiety of phosphoenolpyruvate (PEP) to the 5-hydroxyl of shikimate-3-phosphate (S3P) to produce enolpyruvyl shikimate-3-phosphate and inorganic phosphate. This is 3-phosphoshikimate 1-carboxyvinyltransferase from Salmonella typhi.